The primary structure comprises 763 residues: Endothelin-converting enzyme 2 (763 aa).

The Cytoplasmic portion of the chain corresponds to 1-60 (MNVALHELGGGGSMVEYKRAKLRDEESPEITVEGRATRDSLEVGFQKRTRQLFGSHTQLE). The residue at position 27 (Ser27) is a Phosphoserine. A helical; Signal-anchor for type II membrane protein membrane pass occupies residues 61-81 (LVLAGLILVLAALLLGCLVAL). The Lumenal segment spans residues 82–763 (WVHRDPAHST…MNPGQLCEVW (682 aa)). The Peptidase M13 domain maps to 91-763 (TCVTEACIRV…MNPGQLCEVW (673 aa)). Disulfide bonds link Cys92–Cys97, Cys115–Cys748, Cys123–Cys708, Cys179–Cys428, and Cys637–Cys760. Asn159, Asn163, Asn204, Asn264, Asn309, Asn376, and Asn532 each carry an N-linked (GlcNAc...) asparagine glycan. His600 serves as a coordination point for Zn(2+). Glu601 is a catalytic residue. His604 provides a ligand contact to Zn(2+). 2 N-linked (GlcNAc...) asparagine glycosylation sites follow: Asn625 and Asn633. Glu660 serves as a coordination point for Zn(2+). Catalysis depends on Asp664, which acts as the Proton donor.

This sequence belongs to the peptidase M13 family. Zn(2+) is required as a cofactor.

It is found in the golgi apparatus membrane. It localises to the cytoplasmic vesicle. The protein resides in the secretory vesicle membrane. It carries out the reaction Hydrolysis of the 21-Trp-|-Val-22 bond in big endothelin to form endothelin 1.. Functionally, converts big endothelin-1 to endothelin-1. Also involved in the processing of various neuroendocrine peptides, including neurotensin, angiotensin I, substance P, proenkephalin-derived peptides, and prodynorphin-derived peptides. May play a role in amyloid-beta processing. The polypeptide is Endothelin-converting enzyme 2 (Mus musculus (Mouse)).